Reading from the N-terminus, the 367-residue chain is NADH-quinone oxidoreductase subunit D (367 aa).

The protein belongs to the complex I 49 kDa subunit family. As to quaternary structure, NDH-1 is composed of 14 different subunits. Subunits NuoB, C, D, E, F, and G constitute the peripheral sector of the complex.

The protein resides in the cell membrane. The catalysed reaction is a quinone + NADH + 5 H(+)(in) = a quinol + NAD(+) + 4 H(+)(out). NDH-1 shuttles electrons from NADH, via FMN and iron-sulfur (Fe-S) centers, to quinones in the respiratory chain. The immediate electron acceptor for the enzyme in this species is believed to be ubiquinone. Couples the redox reaction to proton translocation (for every two electrons transferred, four hydrogen ions are translocated across the cytoplasmic membrane), and thus conserves the redox energy in a proton gradient. This chain is NADH-quinone oxidoreductase subunit D, found in Dehalococcoides mccartyi (strain ATCC BAA-2100 / JCM 16839 / KCTC 5957 / BAV1).